The chain runs to 182 residues: MSKQHTAQAPVDPIVLGKMGSSYGIRGWLRVFSSTEDAESIFDYQPWLIQKAGQWQVVELEGWRHHNQDIIIKLKGVDDRDAANLLTNCEIIVDSSQLPELEEGDYYWKDLMGCQVVTTEGYSLGKVIDMMETGSNDVLVIKANLKDAFGIKERLVPFLDGQVIKKVDLTTRTIEVDWDPGF.

Positions 102-182 (EEGDYYWKDL…TIEVDWDPGF (81 aa)) constitute a PRC barrel domain.

Belongs to the RimM family. In terms of assembly, binds ribosomal protein uS19.

It localises to the cytoplasm. In terms of biological role, an accessory protein needed during the final step in the assembly of 30S ribosomal subunit, possibly for assembly of the head region. Essential for efficient processing of 16S rRNA. May be needed both before and after RbfA during the maturation of 16S rRNA. It has affinity for free ribosomal 30S subunits but not for 70S ribosomes. This is Ribosome maturation factor RimM from Klebsiella pneumoniae (strain 342).